Reading from the N-terminus, the 239-residue chain is Beta-glucanase (239 aa).

The first 25 residues, 1–25, serve as a signal peptide directing secretion; sequence MKRVLLILVTGLFMSLCGITSSVSA. One can recognise a GH16 domain in the interval 26–239; sequence QTGGSFFEPF…HYDWMRYRKK (214 aa). The cysteines at positions 57 and 86 are disulfide-linked. Glu-134 acts as the Nucleophile in catalysis.

It belongs to the glycosyl hydrolase 16 family.

It carries out the reaction Hydrolysis of (1-&gt;4)-beta-D-glucosidic linkages in beta-D-glucans containing (1-&gt;3)- and (1-&gt;4)-bonds.. The protein is Beta-glucanase (bglA) of Bacillus amyloliquefaciens (Bacillus velezensis).